We begin with the raw amino-acid sequence, 511 residues long: Thioredoxin reductase 2, mitochondrial (511 aa).

The transit peptide at 1–21 (MAALRGAAARFRGRAPGGARG) directs the protein to the mitochondrion. 29–58 (DLLVIGGGSGGLACAKEAAQLGKKVAVLDY) serves as a coordination point for FAD. C74 and C79 are oxidised to a cystine. The residue at position 316 (K316) is an N6-succinyllysine. The Proton acceptor role is filled by H484. Residues 509–510 (CU) constitute a cross-link (cysteinyl-selenocysteine (Cys-Sec)). Position 510 (U510) is a non-standard amino acid, selenocysteine.

The protein belongs to the class-I pyridine nucleotide-disulfide oxidoreductase family. In terms of assembly, homodimer. The cofactor is FAD.

Its subcellular location is the mitochondrion. The catalysed reaction is [thioredoxin]-dithiol + NADP(+) = [thioredoxin]-disulfide + NADPH + H(+). With respect to regulation, inhibited by 1-chloro-2,4-dinitrobenzene and by zinc, calcium, magnesium and Fe(2+) ions. Functionally, involved in the control of reactive oxygen species levels and the regulation of mitochondrial redox homeostasis. Maintains thioredoxin in a reduced state. May play a role in redox-regulated cell signaling. The protein is Thioredoxin reductase 2, mitochondrial (TXNRD2) of Bos taurus (Bovine).